The primary structure comprises 193 residues: Thioredoxin M4, chloroplastic (193 aa).

A chloroplast-targeting transit peptide spans 1-82; that stretch reads MASLLDSVTV…RIACEAQDTT (82 aa). A Thioredoxin domain is found at 83 to 192; that stretch reads AAAVEVPNLS…LEKTIERFLV (110 aa). Catalysis depends on nucleophile residues Cys-116 and Cys-119. Cys-116 and Cys-119 are disulfide-bonded.

The protein belongs to the thioredoxin family. Plant M-type subfamily.

It localises to the plastid. The protein resides in the chloroplast stroma. Thiol-disulfide oxidoreductase involved in the redox regulation of enzyme of the oxidative pentose phosphate pathway. Under reducing conditions, inhibits the glucose-6-phosphate dehydrogenase. In Arabidopsis thaliana (Mouse-ear cress), this protein is Thioredoxin M4, chloroplastic.